A 121-amino-acid polypeptide reads, in one-letter code: Snaclec coagulation factor IX-binding protein subunit A (121 aa).

The region spanning 1 to 120 is the C-type lectin domain; it reads YEGHCYQTFK…CGERNPFVCE (120 aa). 2 disulfide bridges follow: cysteine 22-cysteine 119 and cysteine 94-cysteine 111. Residues serine 33, glutamate 35, and glutamate 39 each contribute to the Ca(2+) site. Position 120 (glutamate 120) interacts with Ca(2+).

This sequence belongs to the snaclec family. As to quaternary structure, heterodimer of subunits A and B; disulfide-linked. In terms of tissue distribution, expressed by the venom gland.

It is found in the secreted. Anticoagulant protein which binds to the gamma-carboxyglutamic acid-domain regions of factor IX (F9) (but not factor X) in the presence of calcium with a 1 to 1 stoichiometry. The protein is Snaclec coagulation factor IX-binding protein subunit A of Gloydius halys (Chinese water mocassin).